Here is a 208-residue protein sequence, read N- to C-terminus: FMN-dependent NADH:quinone oxidoreductase (208 aa).

Residues serine 9 and 15–17 (SHS) contribute to the FMN site.

The protein belongs to the azoreductase type 1 family. Homodimer. It depends on FMN as a cofactor.

It catalyses the reaction 2 a quinone + NADH + H(+) = 2 a 1,4-benzosemiquinone + NAD(+). It carries out the reaction N,N-dimethyl-1,4-phenylenediamine + anthranilate + 2 NAD(+) = 2-(4-dimethylaminophenyl)diazenylbenzoate + 2 NADH + 2 H(+). Quinone reductase that provides resistance to thiol-specific stress caused by electrophilic quinones. Its function is as follows. Also exhibits azoreductase activity. Catalyzes the reductive cleavage of the azo bond in aromatic azo compounds to the corresponding amines. This chain is FMN-dependent NADH:quinone oxidoreductase, found in Bordetella petrii (strain ATCC BAA-461 / DSM 12804 / CCUG 43448).